A 343-amino-acid polypeptide reads, in one-letter code: Ferredoxin--NADP reductase (343 aa).

Residues aspartate 36, glutamine 44, tyrosine 49, valine 89, phenylalanine 124, aspartate 289, and threonine 330 each contribute to the FAD site.

It belongs to the ferredoxin--NADP reductase type 2 family. In terms of assembly, homodimer. FAD is required as a cofactor.

The catalysed reaction is 2 reduced [2Fe-2S]-[ferredoxin] + NADP(+) + H(+) = 2 oxidized [2Fe-2S]-[ferredoxin] + NADPH. This is Ferredoxin--NADP reductase from Mesorhizobium japonicum (strain LMG 29417 / CECT 9101 / MAFF 303099) (Mesorhizobium loti (strain MAFF 303099)).